The chain runs to 642 residues: Threonine--tRNA ligase (642 aa).

A TGS domain is found at 1–65 (MSDIITVTLP…DEDVKLQIFT (65 aa)). Residues 248-541 (DHRKLGKELD…LIEHFAGAFP (294 aa)) form a catalytic region. Zn(2+) contacts are provided by Cys342, His393, and His518.

This sequence belongs to the class-II aminoacyl-tRNA synthetase family. As to quaternary structure, homodimer. Requires Zn(2+) as cofactor.

It localises to the cytoplasm. It carries out the reaction tRNA(Thr) + L-threonine + ATP = L-threonyl-tRNA(Thr) + AMP + diphosphate + H(+). Functionally, catalyzes the attachment of threonine to tRNA(Thr) in a two-step reaction: L-threonine is first activated by ATP to form Thr-AMP and then transferred to the acceptor end of tRNA(Thr). Also edits incorrectly charged L-seryl-tRNA(Thr). The protein is Threonine--tRNA ligase of Myxococcus xanthus (strain DK1622).